The following is a 119-amino-acid chain: Small ribosomal subunit protein eS25 (119 aa).

Positions M1–K42 are disordered. Residues K28–G37 are compositionally biased toward basic residues.

It belongs to the eukaryotic ribosomal protein eS25 family.

The sequence is that of Small ribosomal subunit protein eS25 (RpS25) from Spodoptera frugiperda (Fall armyworm).